The chain runs to 901 residues: Mediator of RNA polymerase II transcription subunit 14 (901 aa).

It belongs to the Mediator complex subunit 14 family. In terms of assembly, component of the Mediator complex.

It localises to the nucleus. In terms of biological role, component of the Mediator complex, a coactivator involved in the regulated transcription of nearly all RNA polymerase II-dependent genes. Mediator functions as a bridge to convey information from gene-specific regulatory proteins to the basal RNA polymerase II transcription machinery. Mediator is recruited to promoters by direct interactions with regulatory proteins and serves as a scaffold for the assembly of a functional preinitiation complex with RNA polymerase II and the general transcription factors. This is Mediator of RNA polymerase II transcription subunit 14 (RGR1) from Yarrowia lipolytica (strain CLIB 122 / E 150) (Yeast).